The chain runs to 534 residues: Benzaldehyde dehydrogenase, mitochondrial (534 aa).

Residues Met1–Gly29 constitute a mitochondrion transit peptide. Residues Ile199–Asn202, Lys225–Glu228, Gly258–Pro259, Gly278–Ser279, and Glu301–Gly303 contribute to the NAD(+) site. The active-site Proton acceptor is the Glu301. Cys335 serves as the catalytic Nucleophile. NAD(+)-binding positions include Asp381–Lys385 and Glu432–Phe434.

It belongs to the aldehyde dehydrogenase family. In terms of assembly, homotetramer. Expressed predominantly in the upper and lower flower petal lobes, and, at low levels, in flower tubes, pistils, stamens and sepals.

It localises to the mitochondrion. The enzyme catalyses an aldehyde + NAD(+) + H2O = a carboxylate + NADH + 2 H(+). It carries out the reaction acetaldehyde + NAD(+) + H2O = acetate + NADH + 2 H(+). It catalyses the reaction benzaldehyde + NAD(+) + H2O = benzoate + NADH + 2 H(+). The catalysed reaction is 2-phenylacetaldehyde + NAD(+) + H2O = 2-phenylacetate + NADH + 2 H(+). It functions in the pathway aromatic compound metabolism. With respect to regulation, inhibited by disulfiram. Its function is as follows. Component of the floral volatile benzenoid/phenylpropanoid (FVBP) biosynthetic pathway. Catalyzes the oxidation of benzaldehyde to benzoic acid (BA). Capable of oxidizing a broad spectrum of aliphatic aldehydes; increased carbon chain length results in a decrease in its efficiency. The chain is Benzaldehyde dehydrogenase, mitochondrial from Antirrhinum majus (Garden snapdragon).